The primary structure comprises 82 residues: Small ribosomal subunit protein eS27B (82 aa).

The C4-type zinc finger occupies 37–59 (CPGCLNITTVFSHAQTAVTCESC).

The protein belongs to the eukaryotic ribosomal protein eS27 family. Component of the small ribosomal subunit (SSU). Mature yeast ribosomes consist of a small (40S) and a large (60S) subunit. The 40S small subunit contains 1 molecule of ribosomal RNA (18S rRNA) and 33 different proteins (encoded by 57 genes). The large 60S subunit contains 3 rRNA molecules (25S, 5.8S and 5S rRNA) and 46 different proteins (encoded by 81 genes). It depends on Zn(2+) as a cofactor. The N-terminus is not modified.

It is found in the cytoplasm. Functionally, component of the ribosome, a large ribonucleoprotein complex responsible for the synthesis of proteins in the cell. The small ribosomal subunit (SSU) binds messenger RNAs (mRNAs) and translates the encoded message by selecting cognate aminoacyl-transfer RNA (tRNA) molecules. The large subunit (LSU) contains the ribosomal catalytic site termed the peptidyl transferase center (PTC), which catalyzes the formation of peptide bonds, thereby polymerizing the amino acids delivered by tRNAs into a polypeptide chain. The nascent polypeptides leave the ribosome through a tunnel in the LSU and interact with protein factors that function in enzymatic processing, targeting, and the membrane insertion of nascent chains at the exit of the ribosomal tunnel. The chain is Small ribosomal subunit protein eS27B from Saccharomyces cerevisiae (strain ATCC 204508 / S288c) (Baker's yeast).